The chain runs to 75 residues: Small ribosomal subunit protein bS18 (75 aa).

Belongs to the bacterial ribosomal protein bS18 family. In terms of assembly, part of the 30S ribosomal subunit. Forms a tight heterodimer with protein bS6.

Functionally, binds as a heterodimer with protein bS6 to the central domain of the 16S rRNA, where it helps stabilize the platform of the 30S subunit. This chain is Small ribosomal subunit protein bS18, found in Idiomarina loihiensis (strain ATCC BAA-735 / DSM 15497 / L2-TR).